The following is a 509-amino-acid chain: ATP synthase subunit alpha (509 aa).

Position 169-176 (169-176) interacts with ATP; the sequence is GDRQTGKT.

It belongs to the ATPase alpha/beta chains family. In terms of assembly, F-type ATPases have 2 components, CF(1) - the catalytic core - and CF(0) - the membrane proton channel. CF(1) has five subunits: alpha(3), beta(3), gamma(1), delta(1), epsilon(1). CF(0) has three main subunits: a(1), b(2) and c(9-12). The alpha and beta chains form an alternating ring which encloses part of the gamma chain. CF(1) is attached to CF(0) by a central stalk formed by the gamma and epsilon chains, while a peripheral stalk is formed by the delta and b chains.

Its subcellular location is the cell inner membrane. It catalyses the reaction ATP + H2O + 4 H(+)(in) = ADP + phosphate + 5 H(+)(out). Produces ATP from ADP in the presence of a proton gradient across the membrane. The alpha chain is a regulatory subunit. The polypeptide is ATP synthase subunit alpha (Brucella abortus (strain S19)).